Here is a 37-residue protein sequence, read N- to C-terminus: Large ribosomal subunit protein bL36c (37 aa).

The protein belongs to the bacterial ribosomal protein bL36 family.

It localises to the plastid. Its subcellular location is the chloroplast. The polypeptide is Large ribosomal subunit protein bL36c (Chloranthus spicatus (Chulantree)).